Consider the following 353-residue polypeptide: Methionine import ATP-binding protein MetN (353 aa).

An ABC transporter domain is found at 11-251 (ITFDRVEKSF…PEHPTTRSFL (241 aa)). Residue 48-55 (GRSGAGKS) coordinates ATP.

The protein belongs to the ABC transporter superfamily. Methionine importer (TC 3.A.1.24) family. In terms of assembly, the complex is composed of two ATP-binding proteins (MetN), two transmembrane proteins (MetI) and a solute-binding protein (MetQ).

It is found in the cell inner membrane. The catalysed reaction is L-methionine(out) + ATP + H2O = L-methionine(in) + ADP + phosphate + H(+). The enzyme catalyses D-methionine(out) + ATP + H2O = D-methionine(in) + ADP + phosphate + H(+). Part of the ABC transporter complex MetNIQ involved in methionine import. Responsible for energy coupling to the transport system. The sequence is that of Methionine import ATP-binding protein MetN from Cereibacter sphaeroides (strain ATCC 17023 / DSM 158 / JCM 6121 / CCUG 31486 / LMG 2827 / NBRC 12203 / NCIMB 8253 / ATH 2.4.1.) (Rhodobacter sphaeroides).